Consider the following 309-residue polypeptide: tRNA pseudouridine synthase B (309 aa).

Asp-52 acts as the Nucleophile in catalysis.

Belongs to the pseudouridine synthase TruB family. Type 1 subfamily.

The catalysed reaction is uridine(55) in tRNA = pseudouridine(55) in tRNA. Its function is as follows. Responsible for synthesis of pseudouridine from uracil-55 in the psi GC loop of transfer RNAs. The polypeptide is tRNA pseudouridine synthase B (Leptospira interrogans serogroup Icterohaemorrhagiae serovar Lai (strain 56601)).